A 428-amino-acid chain; its full sequence is Immunoglobulin superfamily member 11 (428 aa).

The N-terminal stretch at 1-22 (MTRRRSAPASWLLVSLLGVATS) is a signal peptide. An Ig-like V-type domain is found at 23-136 (LEVSESPGSV…DRGGRNIGVT (114 aa)). At 23–240 (LEVSESPGSV…QVISPQPRSV (218 aa)) the chain is on the extracellular side. Cystine bridges form between Cys44–Cys120 and Cys165–Cys215. Asn102 carries N-linked (GlcNAc...) asparagine glycosylation. The region spanning 144-234 (PSAPQCQIQG…TCLLDLQVIS (91 aa)) is the Ig-like C2-type domain. The helical transmembrane segment at 241 to 261 (GVIAGAVGTGAVLIVICLALI) threads the bilayer. Over 262–428 (SGAFFYWRSK…PAQSRAGSLV (167 aa)) the chain is Cytoplasmic. At Arg375 the chain carries Omega-N-methylarginine. Residues 376–389 (GSSPQVLPRNNGSV) show a composition bias toward polar residues. A disordered region spans residues 376-396 (GSSPQVLPRNNGSVSRKPWPQ).

In terms of processing, N-glycosylated. Highly expressed in testis and detected in kidney and adrenal gland. In brain, expressed in commissure fibers of the corpus callosum and pyramidal cell layers of the dentate gyrus and hippocampus where it is probably expressed by both neurons and glial cells.

The protein localises to the cell membrane. Its function is as follows. Functions as a cell adhesion molecule through homophilic interaction. Stimulates cell growth. The protein is Immunoglobulin superfamily member 11 (Igsf11) of Mus musculus (Mouse).